Here is a 278-residue protein sequence, read N- to C-terminus: Aliphatic sulfonates import ATP-binding protein SsuB (278 aa).

The region spanning 15–236 (LVLRDLSKRF…SQGDAAFAAL (222 aa)) is the ABC transporter domain. 47–54 (GRSGCGKS) contacts ATP. Basic and acidic residues predominate over residues 251-264 (PERESFTHPNDGEP). The disordered stretch occupies residues 251–278 (PERESFTHPNDGEPRWPGVPAHGVRWAV).

The protein belongs to the ABC transporter superfamily. Aliphatic sulfonates importer (TC 3.A.1.17.2) family. In terms of assembly, the complex is composed of two ATP-binding proteins (SsuB), two transmembrane proteins (SsuC) and a solute-binding protein (SsuA).

The protein resides in the cell inner membrane. It carries out the reaction ATP + H2O + aliphatic sulfonate-[sulfonate-binding protein]Side 1 = ADP + phosphate + aliphatic sulfonateSide 2 + [sulfonate-binding protein]Side 1.. Functionally, part of the ABC transporter complex SsuABC involved in aliphatic sulfonates import. Responsible for energy coupling to the transport system. The sequence is that of Aliphatic sulfonates import ATP-binding protein SsuB from Albidiferax ferrireducens (strain ATCC BAA-621 / DSM 15236 / T118) (Rhodoferax ferrireducens).